Here is a 339-residue protein sequence, read N- to C-terminus: Pre-mRNA-splicing factor syf2 (339 aa).

The segment at 1 to 136 is disordered; that stretch reads MPPEKKRKTE…LQSDPSQLTA (136 aa). Residues 7–16 are compositionally biased toward basic and acidic residues; it reads RKTEPEDKAE. The span at 17-37 shows a compositional bias: polar residues; the sequence is VTQQENDVAESTTEPNNQTVT. Positions 45–93 are enriched in low complexity; it reads VTEAALATTSSSSPPVLSASETAQPDTAATSQSSSTPPTSTSAAESAAA. Over residues 94 to 103 the composition is skewed to basic and acidic residues; sequence KARERAERFR. Residues 126 to 135 are compositionally biased toward polar residues; it reads RLQSDPSQLT.

This sequence belongs to the SYF2 family. As to quaternary structure, associated with the spliceosome.

It is found in the nucleus. Functionally, involved in pre-mRNA splicing. In Neurospora crassa (strain ATCC 24698 / 74-OR23-1A / CBS 708.71 / DSM 1257 / FGSC 987), this protein is Pre-mRNA-splicing factor syf2 (msp-4).